A 220-amino-acid chain; its full sequence is Urease accessory protein UreF (220 aa).

The protein belongs to the UreF family. As to quaternary structure, ureD, UreF and UreG form a complex that acts as a GTP-hydrolysis-dependent molecular chaperone, activating the urease apoprotein by helping to assemble the nickel containing metallocenter of UreC. The UreE protein probably delivers the nickel.

It is found in the cytoplasm. Required for maturation of urease via the functional incorporation of the urease nickel metallocenter. The sequence is that of Urease accessory protein UreF from Bordetella bronchiseptica (strain ATCC BAA-588 / NCTC 13252 / RB50) (Alcaligenes bronchisepticus).